Here is a 347-residue protein sequence, read N- to C-terminus: Protein PET130 (347 aa).

It localises to the mitochondrion matrix. The protein is Protein PET130 (PET130) of Saccharomyces cerevisiae (strain ATCC 204508 / S288c) (Baker's yeast).